We begin with the raw amino-acid sequence, 82 residues long: Acyl carrier protein (82 aa).

The 76-residue stretch at 3-78 folds into the Carrier domain; it reads QEIFERVKKV…KAVEHISEKV (76 aa). Position 38 is an O-(pantetheine 4'-phosphoryl)serine (Ser-38).

It belongs to the acyl carrier protein (ACP) family. Post-translationally, 4'-phosphopantetheine is transferred from CoA to a specific serine of apo-ACP by AcpS. This modification is essential for activity because fatty acids are bound in thioester linkage to the sulfhydryl of the prosthetic group.

Its subcellular location is the cytoplasm. It functions in the pathway lipid metabolism; fatty acid biosynthesis. In terms of biological role, carrier of the growing fatty acid chain in fatty acid biosynthesis. The sequence is that of Acyl carrier protein from Gloeothece citriformis (strain PCC 7424) (Cyanothece sp. (strain PCC 7424)).